We begin with the raw amino-acid sequence, 336 residues long: Protein-lysine N-methyltransferase EFM3 (336 aa).

Residues Trp147, 173-175, Asp196, Leu232, and Ala251 contribute to the S-adenosyl-L-methionine site; that span reads GTG.

It belongs to the class I-like SAM-binding methyltransferase superfamily. EEF2KMT family.

The protein resides in the cytoplasm. Its function is as follows. S-adenosyl-L-methionine-dependent protein-lysine N-methyltransferase that methylates elongation factor 2. The polypeptide is Protein-lysine N-methyltransferase EFM3 (Chaetomium thermophilum (strain DSM 1495 / CBS 144.50 / IMI 039719) (Thermochaetoides thermophila)).